The following is a 955-amino-acid chain: Anoctamin-4 (955 aa).

The Extracellular portion of the chain corresponds to 1–352 (MEASSSGITN…FGEKIGLYFA (352 aa)). The interval 72-100 (CKDDDSLLHPGNLTSTSDDASRLEAGGET) is disordered. N-linked (GlcNAc...) asparagine glycosylation is found at Asn83, Asn105, Asn257, and Asn288. A helical membrane pass occupies residues 353–373 (WLGWYTGMLFPAAFIGLFVFL). Over 374–424 (YGVTTLDHSQVSKEVCQATDIIMCPVCDKYCPFMRLSDSCVYAKVTHLFDN) the chain is Cytoplasmic. The helical transmembrane segment at 425 to 445 (GATVFFAVFMAVWATVFLEFW) threads the bilayer. Residues 446–505 (KRRRAVIAYDWDLIDWEEEEEEIRPQFEAKYSKKERMNPISGKPEPYQAFTDKCSRLIVS) lie on the Extracellular side of the membrane. A helical membrane pass occupies residues 506-526 (ASGIFFMICVVIAAVFGIVIY). Residues 527–547 (RVVTVSTFAAFKWALIRNNSQ) are Cytoplasmic-facing. A helical transmembrane segment spans residues 548–568 (VATTGTAVCINFCIIMLLNVL). At 569-595 (YEKVALLLTNLEQPRTESEWENSFTLK) the chain is on the extracellular side. The chain crosses the membrane as a helical span at residues 596–616 (MFLFQFVNLNSSTFYIAFFLG). Over 617-715 (RFTGHPGAYL…AYGLFDEYLE (99 aa)) the chain is Cytoplasmic. Residues 716 to 736 (MILQFGFTTIFVAAFPLAPLL) form a helical membrane-spanning segment. Topologically, residues 737 to 768 (ALLNNIIEIRLDAYKFVTQWRRPLASRAKDIG) are extracellular. The helical transmembrane segment at 769 to 789 (IWYGILEGIGILSVITNAFVI) threads the bilayer. Residues 790 to 885 (AITSDFIPRL…QFWHVLAARL (96 aa)) are Cytoplasmic-facing. Residues 886-906 (AFIIVFEHLVFCIKHLISYLI) traverse the membrane as a helical segment. Residues 907 to 955 (PDLPKDLRDRMRREKYLIQEMMYEAELERLQKERKERKKNGKAHHNEWP) are Extracellular-facing.

This sequence belongs to the anoctamin family.

Its subcellular location is the cell membrane. It carries out the reaction a 1,2-diacyl-sn-glycero-3-phospho-L-serine(in) = a 1,2-diacyl-sn-glycero-3-phospho-L-serine(out). The enzyme catalyses a beta-D-galactosyl-(1&lt;-&gt;1')-N-acylsphing-4-enine(out) = a beta-D-galactosyl-(1&lt;-&gt;1')-N-acylsphing-4-enine(in). The catalysed reaction is a 1,2-diacyl-sn-glycero-3-phosphocholine(in) = a 1,2-diacyl-sn-glycero-3-phosphocholine(out). Its function is as follows. Has calcium-dependent phospholipid scramblase activity; scrambles phosphatidylserine, phosphatidylcholine and galactosylceramide. Does not exhibit calcium-activated chloride channel (CaCC) activity. This Homo sapiens (Human) protein is Anoctamin-4 (ANO4).